We begin with the raw amino-acid sequence, 197 residues long: Nucleoside triphosphate pyrophosphatase (197 aa).

Asp-74 acts as the Proton acceptor in catalysis.

This sequence belongs to the Maf family. It depends on a divalent metal cation as a cofactor.

It is found in the cytoplasm. It carries out the reaction a ribonucleoside 5'-triphosphate + H2O = a ribonucleoside 5'-phosphate + diphosphate + H(+). The enzyme catalyses a 2'-deoxyribonucleoside 5'-triphosphate + H2O = a 2'-deoxyribonucleoside 5'-phosphate + diphosphate + H(+). Nucleoside triphosphate pyrophosphatase. May have a dual role in cell division arrest and in preventing the incorporation of modified nucleotides into cellular nucleic acids. The sequence is that of Nucleoside triphosphate pyrophosphatase from Granulibacter bethesdensis (strain ATCC BAA-1260 / CGDNIH1).